Reading from the N-terminus, the 192-residue chain is Small ribosomal subunit protein eS7 (192 aa).

The protein belongs to the eukaryotic ribosomal protein eS7 family.

The sequence is that of Small ribosomal subunit protein eS7 (RPS7) from Secale cereale (Rye).